Here is a 454-residue protein sequence, read N- to C-terminus: UDP-N-acetylmuramate--L-alanine ligase (454 aa).

113 to 119 (GSHGKTT) is a binding site for ATP.

This sequence belongs to the MurCDEF family.

Its subcellular location is the cytoplasm. It carries out the reaction UDP-N-acetyl-alpha-D-muramate + L-alanine + ATP = UDP-N-acetyl-alpha-D-muramoyl-L-alanine + ADP + phosphate + H(+). It participates in cell wall biogenesis; peptidoglycan biosynthesis. Cell wall formation. This is UDP-N-acetylmuramate--L-alanine ligase from Sulfurihydrogenibium sp. (strain YO3AOP1).